We begin with the raw amino-acid sequence, 322 residues long: Lipoyl synthase (322 aa).

[4Fe-4S] cluster contacts are provided by Cys68, Cys73, Cys79, Cys94, Cys98, Cys101, and Ser309. Positions Phe80–Ser298 constitute a Radical SAM core domain.

The protein belongs to the radical SAM superfamily. Lipoyl synthase family. The cofactor is [4Fe-4S] cluster.

It is found in the cytoplasm. The catalysed reaction is [[Fe-S] cluster scaffold protein carrying a second [4Fe-4S](2+) cluster] + N(6)-octanoyl-L-lysyl-[protein] + 2 oxidized [2Fe-2S]-[ferredoxin] + 2 S-adenosyl-L-methionine + 4 H(+) = [[Fe-S] cluster scaffold protein] + N(6)-[(R)-dihydrolipoyl]-L-lysyl-[protein] + 4 Fe(3+) + 2 hydrogen sulfide + 2 5'-deoxyadenosine + 2 L-methionine + 2 reduced [2Fe-2S]-[ferredoxin]. It functions in the pathway protein modification; protein lipoylation via endogenous pathway; protein N(6)-(lipoyl)lysine from octanoyl-[acyl-carrier-protein]: step 2/2. In terms of biological role, catalyzes the radical-mediated insertion of two sulfur atoms into the C-6 and C-8 positions of the octanoyl moiety bound to the lipoyl domains of lipoate-dependent enzymes, thereby converting the octanoylated domains into lipoylated derivatives. The sequence is that of Lipoyl synthase from Idiomarina loihiensis (strain ATCC BAA-735 / DSM 15497 / L2-TR).